Reading from the N-terminus, the 472-residue chain is ATP synthase subunit beta (472 aa).

Glycine 150–threonine 157 lines the ATP pocket.

It belongs to the ATPase alpha/beta chains family. F-type ATPases have 2 components, CF(1) - the catalytic core - and CF(0) - the membrane proton channel. CF(1) has five subunits: alpha(3), beta(3), gamma(1), delta(1), epsilon(1). CF(0) has four main subunits: a, b, b' and c.

The protein resides in the cellular chromatophore membrane. The enzyme catalyses ATP + H2O + 4 H(+)(in) = ADP + phosphate + 5 H(+)(out). In terms of biological role, produces ATP from ADP in the presence of a proton gradient across the membrane. The catalytic sites are hosted primarily by the beta subunits. This Rhodobacter capsulatus (Rhodopseudomonas capsulata) protein is ATP synthase subunit beta.